A 211-amino-acid chain; its full sequence is Protein-L-isoaspartate O-methyltransferase (211 aa).

The active site involves serine 62.

This sequence belongs to the methyltransferase superfamily. L-isoaspartyl/D-aspartyl protein methyltransferase family.

The protein resides in the cytoplasm. The enzyme catalyses [protein]-L-isoaspartate + S-adenosyl-L-methionine = [protein]-L-isoaspartate alpha-methyl ester + S-adenosyl-L-homocysteine. Its function is as follows. Catalyzes the methyl esterification of L-isoaspartyl residues in peptides and proteins that result from spontaneous decomposition of normal L-aspartyl and L-asparaginyl residues. It plays a role in the repair and/or degradation of damaged proteins. This is Protein-L-isoaspartate O-methyltransferase from Shewanella baltica (strain OS195).